Reading from the N-terminus, the 67-residue chain is MKTKEMRDMTNAELDQRLAELKGELFNLRFQLATGQLENPLRIRNVRKDIARAKTIIRENELKQARA.

This sequence belongs to the universal ribosomal protein uL29 family.

The polypeptide is Large ribosomal subunit protein uL29 (Alkaliphilus oremlandii (strain OhILAs) (Clostridium oremlandii (strain OhILAs))).